A 768-amino-acid polypeptide reads, in one-letter code: DNA replication licensing factor MCM3 homolog 2 (768 aa).

The region spanning 290 to 497 is the MCM domain; that stretch reads TFDLLGNSLA…IDRQISEHVA (208 aa). ATP is bound at residue 340–347; it reads GDPSVAKS. The short motif at 472-475 is the Arginine finger element; the sequence is SRFD. Basic and acidic residues predominate over residues 661–670; sequence EMKQQADHDA. The segment at 661–689 is disordered; it reads EMKQQADHDAGATGGTVDGHGSSGNDPMD. The span at 672-682 shows a compositional bias: gly residues; that stretch reads ATGGTVDGHGS.

It belongs to the MCM family.

Its subcellular location is the nucleus. The enzyme catalyses ATP + H2O = ADP + phosphate + H(+). Functionally, acts as a factor that allows the DNA to undergo a single round of replication per cell cycle. Required for DNA replication and cell proliferation. May act as a component of the MCM complex which is the putative replicative helicase of the replication licensing system in eukaryotic cells. The sequence is that of DNA replication licensing factor MCM3 homolog 2 (ROA2) from Zea mays (Maize).